We begin with the raw amino-acid sequence, 710 residues long: Polyribonucleotide nucleotidyltransferase (710 aa).

Mg(2+) is bound by residues Asp489 and Asp495. In terms of domain architecture, KH spans 556–615 (PKIDTIKIDVDKIKVVIGKGGETIDKIIAETGVKIDIDDEGNVSIYSSDQAAIDRTKEII). One can recognise an S1 motif domain in the interval 625–693 (GEVYHAKVIR…EKGRVDASMK (69 aa)). The tract at residues 691 to 710 (SMKALIPRPPKPEKKEEKHD) is disordered. Residues 700–710 (PKPEKKEEKHD) show a composition bias toward basic and acidic residues.

This sequence belongs to the polyribonucleotide nucleotidyltransferase family. Mg(2+) serves as cofactor.

Its subcellular location is the cytoplasm. The catalysed reaction is RNA(n+1) + phosphate = RNA(n) + a ribonucleoside 5'-diphosphate. Involved in mRNA degradation. Catalyzes the phosphorolysis of single-stranded polyribonucleotides processively in the 3'- to 5'-direction. The protein is Polyribonucleotide nucleotidyltransferase of Streptococcus pyogenes serotype M4 (strain MGAS10750).